The primary structure comprises 265 residues: MNTYAQESKLRLKTKIGADGRCVIEDNFFTPPFKLMAPFYPKDDLAEIMLLAVSPGLMKGDAQDMQLSIGQNCKLRITSQSFEKIHNTEDGFASRDMHIVVGENAFLDFAPFPLIPFENAHFKGNTTISLRSSSQLLYSEIIVAGRVARNELFKFNRLHTKISILQDEKPIYYDNTILDPKTTDMNNMCMFDGYTHYLNLVLVNCPIELSGVRGLIEESEGVDGAVSEIASSHLCVKALAKGSEPLLHLREKIARFTTQTITQKV.

This sequence belongs to the UreD family. UreH, UreF and UreG form a complex that acts as a GTP-hydrolysis-dependent molecular chaperone, activating the urease apoprotein by helping to assemble the nickel containing metallocenter of UreC. The UreE protein probably delivers the nickel.

It localises to the cytoplasm. Functionally, required for maturation of urease via the functional incorporation of the urease nickel metallocenter. The polypeptide is Urease accessory protein UreH (Helicobacter pylori (strain P12)).